A 510-amino-acid chain; its full sequence is MIYIIFSSIFAGFILGFLVRVFLGRLSLLDLEKNLKKVRVESQLEIENERRQIIANAKSQMLKEKNQQDRDIRDRKNEIVNLEKRLLQREETLDKRISALDKQQSRVDFKIKEFEQKEKVIREKEADLVKRLENISGLTREDARKIVIEKVEHESKRDAQVIINKSEQEAQLLADKVAKDILVSTMQRIVTEVSSEFTVASVELPNDEMKGRIIGKEGRNIRALETLIGADIIIDDTPEAVVISCFDPIRKELAKRTLERLVTDGRIHPARIEEVVYNVTNEINSIIQEEGEKVVFDLNIHGLDKRLIRGLGRLYFRSSYGQNVLSHSKETAIIGEILAKEMKLDPVVVKRACLLHDIGKGMESISDNSEGHAITGAELAQSCGESEIVVNAIAAHHNEVKPESLEAIVVQIADAISASRPGARRESLNNYINRLKRLEDIAYSFEGVQKCYAIQAGREVRIIVDNALINDEKSILLARDIAKKIEAEMRYPGKIKVTIIRETRVIEYAR.

The chain crosses the membrane as a helical span at residues Ile-2–Phe-22. A KH domain is found at Thr-198 to Leu-258. One can recognise an HD domain in the interval Val-324 to Ser-419.

Belongs to the RNase Y family.

It localises to the cell membrane. Its function is as follows. Endoribonuclease that initiates mRNA decay. This chain is Ribonuclease Y, found in Borreliella burgdorferi (strain ATCC 35210 / DSM 4680 / CIP 102532 / B31) (Borrelia burgdorferi).